The following is a 474-amino-acid chain: tRNA modification GTPase MnmE (474 aa).

(6S)-5-formyl-5,6,7,8-tetrahydrofolate contacts are provided by Arg-23, Glu-86, and Lys-125. Residues 221 to 396 (GIPVAIVGEP…LKEKLLEYVN (176 aa)) form the TrmE-type G domain. Residue Asn-231 coordinates K(+). GTP-binding positions include 231–236 (NVGKST), 250–256 (SEIAGTT), and 275–278 (DTAG). Ser-235 lines the Mg(2+) pocket. The K(+) site is built by Ser-250, Ile-252, and Thr-255. A Mg(2+)-binding site is contributed by Thr-256. Lys-474 provides a ligand contact to (6S)-5-formyl-5,6,7,8-tetrahydrofolate.

Belongs to the TRAFAC class TrmE-Era-EngA-EngB-Septin-like GTPase superfamily. TrmE GTPase family. Homodimer. Heterotetramer of two MnmE and two MnmG subunits. It depends on K(+) as a cofactor.

It is found in the cytoplasm. Exhibits a very high intrinsic GTPase hydrolysis rate. Involved in the addition of a carboxymethylaminomethyl (cmnm) group at the wobble position (U34) of certain tRNAs, forming tRNA-cmnm(5)s(2)U34. The chain is tRNA modification GTPase MnmE from Christiangramia forsetii (strain DSM 17595 / CGMCC 1.15422 / KT0803) (Gramella forsetii).